The following is a 165-amino-acid chain: Probable chemoreceptor glutamine deamidase CheD (165 aa).

It belongs to the CheD family.

The enzyme catalyses L-glutaminyl-[protein] + H2O = L-glutamyl-[protein] + NH4(+). Probably deamidates glutamine residues to glutamate on methyl-accepting chemotaxis receptors (MCPs), playing an important role in chemotaxis. This chain is Probable chemoreceptor glutamine deamidase CheD, found in Geobacillus kaustophilus (strain HTA426).